Here is a 641-residue protein sequence, read N- to C-terminus: Probable potassium transport system protein Kup (641 aa).

The next 12 helical transmembrane spans lie at I29–I49, I66–L86, W119–T139, P156–F176, G185–I205, L231–Y251, W266–L286, A298–I318, I356–F376, A384–V404, V415–M435, and L438–T458.

Belongs to the HAK/KUP transporter (TC 2.A.72) family.

The protein localises to the cell inner membrane. It carries out the reaction K(+)(in) + H(+)(in) = K(+)(out) + H(+)(out). Its function is as follows. Transport of potassium into the cell. Likely operates as a K(+):H(+) symporter. The chain is Probable potassium transport system protein Kup from Chlorobium phaeovibrioides (strain DSM 265 / 1930) (Prosthecochloris vibrioformis (strain DSM 265)).